A 926-amino-acid chain; its full sequence is Protein translocase subunit SecA (926 aa).

Residues glutamine 87, 105-109 (GEGKT), and aspartate 512 each bind ATP. Positions 911, 913, 922, and 923 each coordinate Zn(2+).

It belongs to the SecA family. As to quaternary structure, monomer and homodimer. Part of the essential Sec protein translocation apparatus which comprises SecA, SecYEG and auxiliary proteins SecDF-YajC and YidC. Zn(2+) serves as cofactor.

It localises to the cell inner membrane. Its subcellular location is the cytoplasm. The catalysed reaction is ATP + H2O + cellular proteinSide 1 = ADP + phosphate + cellular proteinSide 2.. In terms of biological role, part of the Sec protein translocase complex. Interacts with the SecYEG preprotein conducting channel. Has a central role in coupling the hydrolysis of ATP to the transfer of proteins into and across the cell membrane, serving both as a receptor for the preprotein-SecB complex and as an ATP-driven molecular motor driving the stepwise translocation of polypeptide chains across the membrane. The protein is Protein translocase subunit SecA of Psychrobacter cryohalolentis (strain ATCC BAA-1226 / DSM 17306 / VKM B-2378 / K5).